A 394-amino-acid polypeptide reads, in one-letter code: Probable peptidoglycan glycosyltransferase FtsW (394 aa).

The Cytoplasmic portion of the chain corresponds to 1 to 27; sequence MSALRSVAGLLQRWLLPARPAGLYDRQ. A helical transmembrane segment spans residues 28–48; it reads LVVLALALMAVGLVIVASASI. Residues 49 to 64 are Periplasmic-facing; sequence PEGIAINNDPFMFVKR. Residues 65-85 form a helical membrane-spanning segment; the sequence is HGLFLVMALGISWFVLQVPMA. The Cytoplasmic portion of the chain corresponds to 86-88; that stretch reads RWQ. Residues 89-109 form a helical membrane-spanning segment; it reads HYNGPMLVLAILMLVLVLLVG. The Periplasmic portion of the chain corresponds to 110-123; it reads RSVNGSIRWLPLGP. The helical transmembrane segment at 124–144 threads the bilayer; the sequence is FNLQPAEFGKLALFVYLAGYL. Over 145 to 154 the chain is Cytoplasmic; that stretch reads VRRQSEVRER. Residues 155 to 175 traverse the membrane as a helical segment; sequence FIGFMKPMAVLFVVAILLLAQ. Residue Pro-176 is a topological domain, periplasmic. A helical membrane pass occupies residues 177–197; it reads DLGSVVVMFVTSLGMLFLAGA. A topological domain (cytoplasmic) is located at residue Arg-198. A helical membrane pass occupies residues 199 to 219; it reads LGQFIGLILVGVSAVVTLVIA. Topologically, residues 220–279 are periplasmic; it reads EPYRMRRVTSFLDPWADPFGSGYQLTQSLMAFGRGSWFGEGLGNSIQKMEYLPEAHTDFV. A helical transmembrane segment spans residues 280-300; it reads FAILGEELGYAGVLGALFLIF. Residues 301–322 are Cytoplasmic-facing; it reads ALSFKALKLGHQALVAERLYEG. A helical transmembrane segment spans residues 323–343; it reads YLAIGIGIWFSFQTFVNVGAA. Over 344–354 the chain is Periplasmic; the sequence is SGMMPTKGLTL. A helical membrane pass occupies residues 355-375; that stretch reads PLVSYGGSSLIIMMVAVSMLV. Residues 376–394 are Cytoplasmic-facing; the sequence is RIDFELRQASAQARVREVS.

It belongs to the SEDS family. FtsW subfamily.

It is found in the cell inner membrane. It carries out the reaction [GlcNAc-(1-&gt;4)-Mur2Ac(oyl-L-Ala-gamma-D-Glu-L-Lys-D-Ala-D-Ala)](n)-di-trans,octa-cis-undecaprenyl diphosphate + beta-D-GlcNAc-(1-&gt;4)-Mur2Ac(oyl-L-Ala-gamma-D-Glu-L-Lys-D-Ala-D-Ala)-di-trans,octa-cis-undecaprenyl diphosphate = [GlcNAc-(1-&gt;4)-Mur2Ac(oyl-L-Ala-gamma-D-Glu-L-Lys-D-Ala-D-Ala)](n+1)-di-trans,octa-cis-undecaprenyl diphosphate + di-trans,octa-cis-undecaprenyl diphosphate + H(+). It functions in the pathway cell wall biogenesis; peptidoglycan biosynthesis. In terms of biological role, peptidoglycan polymerase that is essential for cell division. The protein is Probable peptidoglycan glycosyltransferase FtsW of Aeromonas salmonicida (strain A449).